The primary structure comprises 303 residues: Protease HtpX (303 aa).

Helical transmembrane passes span 4–24 and 42–62; these read IGLF…VFGI and IASL…ISLF. A Zn(2+)-binding site is contributed by histidine 149. Glutamate 150 is an active-site residue. Residue histidine 153 participates in Zn(2+) binding. The next 2 membrane-spanning stretches (helical) occupy residues 157-177 and 200-220; these read GDMV…MFFA and FVTS…IVMW. Glutamate 226 lines the Zn(2+) pocket.

The protein belongs to the peptidase M48B family. The cofactor is Zn(2+).

It localises to the cell inner membrane. This chain is Protease HtpX, found in Psychrobacter sp. (strain PRwf-1).